A 177-amino-acid chain; its full sequence is Putative HTH-type transcriptional regulator YvaV (177 aa).

A DNA-binding region (H-T-H motif) is located at residues 49-73 (LTELSEATGMSKTRMSQVVREMLDA).

It belongs to the GbsR family.

The protein is Putative HTH-type transcriptional regulator YvaV (yvaV) of Bacillus subtilis (strain 168).